The primary structure comprises 395 residues: Chaperone protein DnaJ 2 (395 aa).

The J domain occupies aspartate 10–lysine 75. Residues glycine 165–threonine 242 form a CR-type zinc finger. Residues cysteine 178, cysteine 181, cysteine 194, cysteine 197, cysteine 216, cysteine 219, cysteine 230, and cysteine 233 each contribute to the Zn(2+) site. 4 CXXCXGXG motif repeats span residues cysteine 178 to glycine 185, cysteine 194 to glycine 201, cysteine 216 to glycine 223, and cysteine 230 to glycine 237.

The protein belongs to the DnaJ family. Homodimer. Zn(2+) serves as cofactor.

It localises to the cytoplasm. Participates actively in the response to hyperosmotic and heat shock by preventing the aggregation of stress-denatured proteins and by disaggregating proteins, also in an autonomous, DnaK-independent fashion. Unfolded proteins bind initially to DnaJ; upon interaction with the DnaJ-bound protein, DnaK hydrolyzes its bound ATP, resulting in the formation of a stable complex. GrpE releases ADP from DnaK; ATP binding to DnaK triggers the release of the substrate protein, thus completing the reaction cycle. Several rounds of ATP-dependent interactions between DnaJ, DnaK and GrpE are required for fully efficient folding. Also involved, together with DnaK and GrpE, in the DNA replication of plasmids through activation of initiation proteins. This chain is Chaperone protein DnaJ 2, found in Corynebacterium efficiens (strain DSM 44549 / YS-314 / AJ 12310 / JCM 11189 / NBRC 100395).